The chain runs to 340 residues: uncharacterized protein (340 aa).

The 250-residue stretch at 58–307 (AALPFRYTVN…PSYREMLRER (250 aa)) folds into the Radical SAM core domain. [4Fe-4S] cluster contacts are provided by cysteine 72, cysteine 76, and cysteine 79. 2 helical membrane passes run 140 to 160 (YALM…LSIL) and 243 to 263 (QLLG…GLHL).

Requires [4Fe-4S] cluster as cofactor.

It is found in the cell membrane. This is an uncharacterized protein from Mycobacterium tuberculosis (strain CDC 1551 / Oshkosh).